Consider the following 239-residue polypeptide: Lactate utilization protein A (239 aa).

The protein belongs to the LutA/YkgE family.

Its function is as follows. Is involved in L-lactate degradation and allows cells to grow with lactate as the sole carbon source. The sequence is that of Lactate utilization protein A from Shouchella clausii (strain KSM-K16) (Alkalihalobacillus clausii).